Here is a 287-residue protein sequence, read N- to C-terminus: Eukaryotic translation initiation factor 3 subunit G (287 aa).

The tract at residues 163-207 is disordered; sequence EEDLESKEKDTKLGPTVPGSGKYVAPGMRGDRPAVTGGAERRSEE. Positions 208–286 constitute an RRM domain; that stretch reads NTCRVTNLPE…LVLKVEWTRF (79 aa).

The protein belongs to the eIF-3 subunit G family. As to quaternary structure, component of the eukaryotic translation initiation factor 3 (eIF-3) complex.

It is found in the cytoplasm. RNA-binding component of the eukaryotic translation initiation factor 3 (eIF-3) complex, which is involved in protein synthesis of a specialized repertoire of mRNAs and, together with other initiation factors, stimulates binding of mRNA and methionyl-tRNAi to the 40S ribosome. The eIF-3 complex specifically targets and initiates translation of a subset of mRNAs involved in cell proliferation. This subunit can bind 18S rRNA. The polypeptide is Eukaryotic translation initiation factor 3 subunit G (Brugia malayi (Filarial nematode worm)).